The primary structure comprises 105 residues: Small ribosomal subunit protein eS24 (105 aa).

It belongs to the eukaryotic ribosomal protein eS24 family.

The protein is Small ribosomal subunit protein eS24 of Ignicoccus hospitalis (strain KIN4/I / DSM 18386 / JCM 14125).